The sequence spans 369 residues: MSQSDYYEVLGVGRDADENELKKAYRKLAMKYHPDRNAGDTKAEERFKNIKEAYEILSDPNKRAAYDQFGHAGLNGGMGGAGAQGFSDAFSDIFSDLFGMRGGGRSSVHRGADLRYNLEITLEQAARGAETQIRIPRQEVCDTCHGSGAKPGTSPKTCPTCNGHGQIRMQQGFFSIQQTCSHCQGSGKVVSDPCGDCHGAGWVKRQKTLSVRIPAGVDEGDSIRLTGEGEAGANGGQAGDLYIVIHLASHPVFQREGNHLHCEIPISFTVAALGGEIEVPTLDGHARIKVPAGTQTGKIFRLRSKGITGVRNQSTGDLLCHVAVETPVDLTARQKELLEEFESISQKDGSRHHPRAKSWMEKAREFFAE.

The region spanning 5-70 (DYYEVLGVGR…NKRAAYDQFG (66 aa)) is the J domain. Residues 128–206 (GAETQIRIPR…CHGAGWVKRQ (79 aa)) form a CR-type zinc finger. Zn(2+) contacts are provided by cysteine 141, cysteine 144, cysteine 158, cysteine 161, cysteine 180, cysteine 183, cysteine 194, and cysteine 197. 4 CXXCXGXG motif repeats span residues 141 to 148 (CDTCHGSG), 158 to 165 (CPTCNGHG), 180 to 187 (CSHCQGSG), and 194 to 201 (CGDCHGAG).

This sequence belongs to the DnaJ family. Homodimer. The cofactor is Zn(2+).

Its subcellular location is the cytoplasm. In terms of biological role, participates actively in the response to hyperosmotic and heat shock by preventing the aggregation of stress-denatured proteins and by disaggregating proteins, also in an autonomous, DnaK-independent fashion. Unfolded proteins bind initially to DnaJ; upon interaction with the DnaJ-bound protein, DnaK hydrolyzes its bound ATP, resulting in the formation of a stable complex. GrpE releases ADP from DnaK; ATP binding to DnaK triggers the release of the substrate protein, thus completing the reaction cycle. Several rounds of ATP-dependent interactions between DnaJ, DnaK and GrpE are required for fully efficient folding. Also involved, together with DnaK and GrpE, in the DNA replication of plasmids through activation of initiation proteins. This Nitrosomonas europaea (strain ATCC 19718 / CIP 103999 / KCTC 2705 / NBRC 14298) protein is Chaperone protein DnaJ.